The sequence spans 608 residues: Malonate--CoA ligase (608 aa).

It belongs to the ATP-dependent AMP-binding enzyme family. As to expression, expressed in flowers.

Its subcellular location is the cytoplasm. It is found in the nucleus. The enzyme catalyses malonate + ATP + CoA = malonyl-CoA + AMP + diphosphate. Functionally, malonate--CoA ligase that catalyzes the formation of malonyl-CoA directly from malonate and CoA. May be required for the detoxification of malonate. This is Malonate--CoA ligase (AAE13) from Arabidopsis thaliana (Mouse-ear cress).